A 281-amino-acid chain; its full sequence is UDP-N-acetylenolpyruvoylglucosamine reductase (281 aa).

The FAD-binding PCMH-type domain occupies valine 17–glycine 180. Arginine 159 is a catalytic residue. Serine 206 serves as the catalytic Proton donor. The active site involves glutamate 276.

It belongs to the MurB family. It depends on FAD as a cofactor.

Its subcellular location is the cytoplasm. The enzyme catalyses UDP-N-acetyl-alpha-D-muramate + NADP(+) = UDP-N-acetyl-3-O-(1-carboxyvinyl)-alpha-D-glucosamine + NADPH + H(+). The protein operates within cell wall biogenesis; peptidoglycan biosynthesis. Its function is as follows. Cell wall formation. This is UDP-N-acetylenolpyruvoylglucosamine reductase from Fusobacterium nucleatum subsp. nucleatum (strain ATCC 25586 / DSM 15643 / BCRC 10681 / CIP 101130 / JCM 8532 / KCTC 2640 / LMG 13131 / VPI 4355).